A 397-amino-acid chain; its full sequence is NADH-quinone oxidoreductase subunit H (397 aa).

9 consecutive transmembrane segments (helical) span residues 7-27 (ALLI…TAFA), 78-98 (LVYT…FGGI), 120-140 (ILAL…GGWA), 164-184 (MGLS…LDIV), 195-215 (WLIL…FAEV), 247-267 (MAEY…FFGG), 283-303 (SWPL…FIWV), 322-342 (LTLP…AFVP), and 353-373 (WLLG…SDAV).

Belongs to the complex I subunit 1 family. As to quaternary structure, NDH-1 is composed of 15 different subunits. Subunits NuoA, H, J, K, L, M, N constitute the membrane sector of the complex.

Its subcellular location is the cell membrane. The enzyme catalyses a quinone + NADH + 5 H(+)(in) = a quinol + NAD(+) + 4 H(+)(out). In terms of biological role, NDH-1 shuttles electrons from NADH, via FMN and iron-sulfur (Fe-S) centers, to quinones in the respiratory chain. The immediate electron acceptor for the enzyme in this species is believed to be ubiquinone. Couples the redox reaction to proton translocation (for every two electrons transferred, four hydrogen ions are translocated across the cytoplasmic membrane), and thus conserves the redox energy in a proton gradient. This subunit may bind ubiquinone. The sequence is that of NADH-quinone oxidoreductase subunit H from Deinococcus radiodurans (strain ATCC 13939 / DSM 20539 / JCM 16871 / CCUG 27074 / LMG 4051 / NBRC 15346 / NCIMB 9279 / VKM B-1422 / R1).